Consider the following 305-residue polypeptide: Ribonuclease Z (305 aa).

The Zn(2+) site is built by His-63, His-65, Asp-67, His-68, His-142, Asp-209, and His-267. Asp-67 functions as the Proton acceptor in the catalytic mechanism.

Belongs to the RNase Z family. Homodimer. Requires Zn(2+) as cofactor.

It catalyses the reaction Endonucleolytic cleavage of RNA, removing extra 3' nucleotides from tRNA precursor, generating 3' termini of tRNAs. A 3'-hydroxy group is left at the tRNA terminus and a 5'-phosphoryl group is left at the trailer molecule.. Zinc phosphodiesterase, which displays some tRNA 3'-processing endonuclease activity. Probably involved in tRNA maturation, by removing a 3'-trailer from precursor tRNA. The sequence is that of Ribonuclease Z from Nocardia farcinica (strain IFM 10152).